The chain runs to 187 residues: Large ribosomal subunit protein uL24c (187 aa).

A chloroplast-targeting transit peptide spans 1-41 (MAALQSSFAGLSTSFFGQRFSPPLSLPPLVKSTEGPCLIQA).

This sequence belongs to the universal ribosomal protein uL24 family. As to quaternary structure, part of the 50S ribosomal subunit.

The protein resides in the plastid. The protein localises to the chloroplast. In terms of biological role, one of two assembly initiator proteins, it binds directly to the 5'-end of the 23S rRNA, where it nucleates assembly of the 50S subunit. The polypeptide is Large ribosomal subunit protein uL24c (RPL24) (Nicotiana tabacum (Common tobacco)).